We begin with the raw amino-acid sequence, 168 residues long: Photosystem I assembly protein Ycf3 (168 aa).

TPR repeat units lie at residues 35–68 (AFTY…EIDP), 72–105 (SYIL…NPFL), and 120–153 (GEQA…TPGN).

The protein belongs to the Ycf3 family.

It is found in the plastid. The protein localises to the chloroplast thylakoid membrane. Its function is as follows. Essential for the assembly of the photosystem I (PSI) complex. May act as a chaperone-like factor to guide the assembly of the PSI subunits. This is Photosystem I assembly protein Ycf3 from Panax ginseng (Korean ginseng).